Consider the following 273-residue polypeptide: BTB and MATH domain-containing protein 15 (273 aa).

The 117-residue stretch at 7 to 123 (EFVFHHTFKD…DNSFTIEACV (117 aa)) folds into the MATH domain. In terms of domain architecture, BTB spans 147–206 (SDVILVVGDEKFYVLKLFLASHSSYFNALFLGKFKEADQSEVTLQNIDPTDFQSLLEVLY).

As to quaternary structure, interacts with cul-3.

The protein operates within protein modification; protein ubiquitination. In terms of biological role, probable substrate-specific adapter of an E3 ubiquitin-protein ligase complex which mediates the ubiquitination and subsequent proteasomal degradation of target proteins. In Caenorhabditis elegans, this protein is BTB and MATH domain-containing protein 15 (bath-15).